The chain runs to 357 residues: Transactivator protein DR7 (357 aa).

The interaction with host p53 stretch occupies residues 107-187 (LVGKDGAVYV…LLTVGGLCQT (81 aa)).

This sequence belongs to the herpesviridae US22 family. In terms of assembly, interacts with host p53 and inhibits p53-activated transcription.

Its function is as follows. Involved in transactivation. Displays transforming activity. This Homo sapiens (Human) protein is Transactivator protein DR7 (DR7L).